A 34-amino-acid polypeptide reads, in one-letter code: Conotoxin Cl6d (34 aa).

Disulfide bonds link Cys4–Cys19, Cys12–Cys29, and Cys18–Cys33. Pro14 and Pro21 each carry 4-hydroxyproline.

In terms of tissue distribution, expressed by the venom duct.

Its subcellular location is the secreted. The protein is Conotoxin Cl6d of Californiconus californicus (California cone).